Here is a 206-residue protein sequence, read N- to C-terminus: MITDYEWPLWQTTALVCGIDEAGRGPLAGPVVAAAVIFPRWFRPVGTILERVNDSKKLSAAERELLAPAIRNAAAFWAVAEVDPETIDQINILQATMLAMNQAVAALPIQPELLLVDGNRFRTELPIPYETVVKGDSKVFSIAAASVLAKTHRDELMVAYASEYPQYGFERHVGYPTRAHVEAIRQHGRCPIHRQSFRLRQLGEKP.

Residues 14–206 enclose the RNase H type-2 domain; sequence ALVCGIDEAG…FRLRQLGEKP (193 aa). Residues D20, E21, and D117 each contribute to the a divalent metal cation site.

Belongs to the RNase HII family. Requires Mn(2+) as cofactor. The cofactor is Mg(2+).

The protein resides in the cytoplasm. The catalysed reaction is Endonucleolytic cleavage to 5'-phosphomonoester.. Its function is as follows. Endonuclease that specifically degrades the RNA of RNA-DNA hybrids. The chain is Ribonuclease HII from Pelodictyon phaeoclathratiforme (strain DSM 5477 / BU-1).